A 332-amino-acid chain; its full sequence is Transaldolase (332 aa).

Lysine 135 acts as the Schiff-base intermediate with substrate in catalysis.

Belongs to the transaldolase family. Type 1 subfamily. In terms of assembly, homodimer.

Its subcellular location is the cytoplasm. The catalysed reaction is D-sedoheptulose 7-phosphate + D-glyceraldehyde 3-phosphate = D-erythrose 4-phosphate + beta-D-fructose 6-phosphate. It functions in the pathway carbohydrate degradation; pentose phosphate pathway; D-glyceraldehyde 3-phosphate and beta-D-fructose 6-phosphate from D-ribose 5-phosphate and D-xylulose 5-phosphate (non-oxidative stage): step 2/3. Its function is as follows. Transaldolase is important for the balance of metabolites in the pentose-phosphate pathway. The sequence is that of Transaldolase from Prochlorococcus marinus (strain NATL2A).